The chain runs to 132 residues: Small ribosomal subunit protein eS24 (132 aa).

Residues 90–100 show a composition bias toward basic and acidic residues; it reads RLARHGLFEKK. The tract at residues 90–132 is disordered; sequence RLARHGLFEKKKTSRKQRKERKNRMKKVRGTKKASVGASKKKD. Residues 101–121 show a composition bias toward basic residues; that stretch reads KTSRKQRKERKNRMKKVRGTK.

It belongs to the eukaryotic ribosomal protein eS24 family. Component of the small ribosomal subunit.

The protein resides in the cytoplasm. In terms of biological role, component of the small ribosomal subunit. The ribosome is a large ribonucleoprotein complex responsible for the synthesis of proteins in the cell. Required for processing of pre-rRNA and maturation of 40S ribosomal subunits. This Takifugu rubripes (Japanese pufferfish) protein is Small ribosomal subunit protein eS24 (rps24).